We begin with the raw amino-acid sequence, 78 residues long: Acyl carrier protein (78 aa).

The 76-residue stretch at 1-76 (MSLEDDVKLI…DVITYIKTRQ (76 aa)) folds into the Carrier domain. S36 carries the O-(pantetheine 4'-phosphoryl)serine modification.

Belongs to the acyl carrier protein (ACP) family. Post-translationally, 4'-phosphopantetheine is transferred from CoA to a specific serine of apo-ACP by AcpS. This modification is essential for activity because fatty acids are bound in thioester linkage to the sulfhydryl of the prosthetic group.

Its subcellular location is the cytoplasm. It participates in lipid metabolism; fatty acid biosynthesis. Carrier of the growing fatty acid chain in fatty acid biosynthesis. The polypeptide is Acyl carrier protein (Chlamydia felis (strain Fe/C-56) (Chlamydophila felis)).